The sequence spans 517 residues: GMP synthase [glutamine-hydrolyzing] (517 aa).

The region spanning 9–199 (RILILDFGSQ…VLGVCGCERL (191 aa)) is the Glutamine amidotransferase type-1 domain. Cysteine 86 acts as the Nucleophile in catalysis. Residues histidine 173 and glutamate 175 contribute to the active site. The region spanning 200–392 (WTSESIIEDA…LGLPYNMLYR (193 aa)) is the GMPS ATP-PPase domain. Residue 227-233 (SGGVDSS) coordinates ATP.

Homodimer.

It carries out the reaction XMP + L-glutamine + ATP + H2O = GMP + L-glutamate + AMP + diphosphate + 2 H(+). It participates in purine metabolism; GMP biosynthesis; GMP from XMP (L-Gln route): step 1/1. Catalyzes the synthesis of GMP from XMP. This chain is GMP synthase [glutamine-hydrolyzing], found in Vibrio cholerae serotype O1 (strain ATCC 39541 / Classical Ogawa 395 / O395).